The primary structure comprises 620 residues: Chaperone protein DnaK (620 aa).

A Phosphothreonine; by autocatalysis modification is found at Thr-197. The tract at residues 597-620 (AMANKNNAEQPKKKDDDVIDAEVE) is disordered.

It belongs to the heat shock protein 70 family.

In terms of biological role, acts as a chaperone. The protein is Chaperone protein DnaK of Helicobacter pylori (strain Shi470).